A 127-amino-acid polypeptide reads, in one-letter code: Cytochrome c' (127 aa).

At Gln-1 the chain carries Pyrrolidone carboxylic acid. Heme c-binding residues include Arg-12, Gln-13, Asp-67, Cys-116, Cys-119, and His-120.

Homodimer. Binds 1 heme c group covalently per subunit.

The protein localises to the periplasm. Functionally, cytochrome c' is the most widely occurring bacterial c-type cytochrome. Cytochromes c' are high-spin proteins and the heme has no sixth ligand. Their exact function is not known. The chain is Cytochrome c' from Alcaligenes xylosoxydans xylosoxydans (Achromobacter xylosoxidans).